The following is a 224-amino-acid chain: tRNA (guanine-N(7)-)-methyltransferase (224 aa).

Residues Glu-54, Glu-79, and Asp-129 each coordinate S-adenosyl-L-methionine. The active site involves Asp-129. The substrate site is built by Lys-133 and Asp-165.

The protein belongs to the class I-like SAM-binding methyltransferase superfamily. TrmB family.

The enzyme catalyses guanosine(46) in tRNA + S-adenosyl-L-methionine = N(7)-methylguanosine(46) in tRNA + S-adenosyl-L-homocysteine. It participates in tRNA modification; N(7)-methylguanine-tRNA biosynthesis. Catalyzes the formation of N(7)-methylguanine at position 46 (m7G46) in tRNA. The sequence is that of tRNA (guanine-N(7)-)-methyltransferase from Chlamydia pneumoniae (Chlamydophila pneumoniae).